A 290-amino-acid polypeptide reads, in one-letter code: Glycine--tRNA ligase alpha subunit (290 aa).

The protein belongs to the class-II aminoacyl-tRNA synthetase family. As to quaternary structure, tetramer of two alpha and two beta subunits.

It localises to the cytoplasm. It carries out the reaction tRNA(Gly) + glycine + ATP = glycyl-tRNA(Gly) + AMP + diphosphate. In Gloeobacter violaceus (strain ATCC 29082 / PCC 7421), this protein is Glycine--tRNA ligase alpha subunit.